The sequence spans 518 residues: uncharacterized protein (518 aa).

Transmembrane regions (helical) follow at residues 13 to 33 (WAIS…GIIS), 49 to 69 (WGSW…PIVG), 86 to 106 (CLFG…LFLI), 109 to 129 (LIQA…ILAT), 141 to 161 (LLGA…SFLL), 169 to 189 (WLFL…ACFI), 202 to 222 (AAGI…MTNL), 231 to 251 (LGNP…AALI), 280 to 300 (LIIG…PSYV), 312 to 332 (GYWM…GGAL), 341 to 361 (TVIL…LWVT), 365 to 385 (EFVI…GAPL), 410 to 430 (IGLT…FDQI), and 493 to 513 (LYAA…IPAF).

Belongs to the major facilitator superfamily. TCR/Tet family.

The protein localises to the cell membrane. This is an uncharacterized protein from Bacillus subtilis (strain 168).